Here is a 106-residue protein sequence, read N- to C-terminus: Large ribosomal subunit protein uL24 (106 aa).

The protein belongs to the universal ribosomal protein uL24 family. Part of the 50S ribosomal subunit.

Its function is as follows. One of two assembly initiator proteins, it binds directly to the 5'-end of the 23S rRNA, where it nucleates assembly of the 50S subunit. One of the proteins that surrounds the polypeptide exit tunnel on the outside of the subunit. In Orientia tsutsugamushi (strain Boryong) (Rickettsia tsutsugamushi), this protein is Large ribosomal subunit protein uL24.